The chain runs to 289 residues: Probable endonuclease 4 (289 aa).

9 residues coordinate Zn(2+): His76, His116, Glu152, Asp186, His189, His220, Asp233, His235, and Glu265.

The protein belongs to the AP endonuclease 2 family. Zn(2+) is required as a cofactor.

It carries out the reaction Endonucleolytic cleavage to 5'-phosphooligonucleotide end-products.. Its function is as follows. Endonuclease IV plays a role in DNA repair. It cleaves phosphodiester bonds at apurinic or apyrimidinic (AP) sites, generating a 3'-hydroxyl group and a 5'-terminal sugar phosphate. The polypeptide is Probable endonuclease 4 (Malacoplasma penetrans (strain HF-2) (Mycoplasma penetrans)).